The primary structure comprises 1117 residues: DNA polymerase (1117 aa).

The segment at 591-621 (ESSPVASFEEDSEQTSDSSLGEVSSQGSSDG) is disordered. Residues 606 to 618 (SDSSLGEVSSQGS) are compositionally biased toward low complexity.

The protein belongs to the DNA polymerase type-B family.

The protein resides in the host nucleus. The enzyme catalyses DNA(n) + a 2'-deoxyribonucleoside 5'-triphosphate = DNA(n+1) + diphosphate. The protein is DNA polymerase of Cavia porcellus (Guinea pig).